The primary structure comprises 126 residues: Small ribosomal subunit protein uS13 (126 aa).

A disordered region spans residues 96-126; that stretch reads LPVHGQRTHTNARTRKGPRRAIAGKKKAGKK.

This sequence belongs to the universal ribosomal protein uS13 family. As to quaternary structure, part of the 30S ribosomal subunit. Forms a loose heterodimer with protein S19. Forms two bridges to the 50S subunit in the 70S ribosome.

Its function is as follows. Located at the top of the head of the 30S subunit, it contacts several helices of the 16S rRNA. In the 70S ribosome it contacts the 23S rRNA (bridge B1a) and protein L5 of the 50S subunit (bridge B1b), connecting the 2 subunits; these bridges are implicated in subunit movement. Contacts the tRNAs in the A and P-sites. The chain is Small ribosomal subunit protein uS13 from Frankia alni (strain DSM 45986 / CECT 9034 / ACN14a).